The chain runs to 162 residues: Zinc finger protein 593 homolog (162 aa).

Residues 59-83 (FYCVHCAKYFIDDTAMQAHFRTKVH) form a C2H2-type zinc finger. The segment at 110 to 162 (VKPKKRAMETQPSKEDVVAGKRIRVEVVPEDTDATDSPSTSKTKRKKVEKMET) is disordered. Positions 115-136 (RAMETQPSKEDVVAGKRIRVEV) are enriched in basic and acidic residues. The segment covering 151–162 (KTKRKKVEKMET) has biased composition (basic residues).

It belongs to the ZNF593/BUD20 C2H2-type zinc-finger protein family. Associates with pre-60S ribosomal particles; released from the pre-60S particle very early in the cytoplasm.

The protein resides in the nucleus. It is found in the cytoplasm. Its function is as follows. Involved in pre-60S ribosomal particles maturation by promoting the nuclear export of the 60S ribosome. The polypeptide is Zinc finger protein 593 homolog (Drosophila melanogaster (Fruit fly)).